A 122-amino-acid polypeptide reads, in one-letter code: Large ribosomal subunit protein uL14 (122 aa).

Belongs to the universal ribosomal protein uL14 family. As to quaternary structure, part of the 50S ribosomal subunit. Forms a cluster with proteins L3 and L19. In the 70S ribosome, L14 and L19 interact and together make contacts with the 16S rRNA in bridges B5 and B8.

Functionally, binds to 23S rRNA. Forms part of two intersubunit bridges in the 70S ribosome. This Agrobacterium fabrum (strain C58 / ATCC 33970) (Agrobacterium tumefaciens (strain C58)) protein is Large ribosomal subunit protein uL14.